Reading from the N-terminus, the 171-residue chain is 3-hydroxydecanoyl-[acyl-carrier-protein] dehydratase (171 aa).

His70 is a catalytic residue.

This sequence belongs to the thioester dehydratase family. FabA subfamily. As to quaternary structure, homodimer.

It localises to the cytoplasm. It carries out the reaction a (3R)-hydroxyacyl-[ACP] = a (2E)-enoyl-[ACP] + H2O. The enzyme catalyses (3R)-hydroxydecanoyl-[ACP] = (2E)-decenoyl-[ACP] + H2O. The catalysed reaction is (2E)-decenoyl-[ACP] = (3Z)-decenoyl-[ACP]. It participates in lipid metabolism; fatty acid biosynthesis. Functionally, necessary for the introduction of cis unsaturation into fatty acids. Catalyzes the dehydration of (3R)-3-hydroxydecanoyl-ACP to E-(2)-decenoyl-ACP and then its isomerization to Z-(3)-decenoyl-ACP. Can catalyze the dehydratase reaction for beta-hydroxyacyl-ACPs with saturated chain lengths up to 16:0, being most active on intermediate chain length. The chain is 3-hydroxydecanoyl-[acyl-carrier-protein] dehydratase from Stenotrophomonas maltophilia (strain R551-3).